A 124-amino-acid chain; its full sequence is Small ribosomal subunit protein uS13 (124 aa).

Residues 95 to 124 are disordered; the sequence is GLPVRGQRTKTNARTRKGPKRTIAGKKKAR.

Belongs to the universal ribosomal protein uS13 family. As to quaternary structure, part of the 30S ribosomal subunit. Forms a loose heterodimer with protein S19. Forms two bridges to the 50S subunit in the 70S ribosome.

Functionally, located at the top of the head of the 30S subunit, it contacts several helices of the 16S rRNA. In the 70S ribosome it contacts the 23S rRNA (bridge B1a) and protein L5 of the 50S subunit (bridge B1b), connecting the 2 subunits; these bridges are implicated in subunit movement. Contacts the tRNAs in the A and P-sites. The polypeptide is Small ribosomal subunit protein uS13 (Mycobacterium sp. (strain JLS)).